The primary structure comprises 52 residues: Rubredoxin (52 aa).

The Rubredoxin-like domain occupies 1–52 (MEKWQCTVCGYIYDPEVGDPTQNIPPGTKFEDLPDDWVCPDCGVGKDQFEKI). 4 residues coordinate Fe cation: Cys6, Cys9, Cys39, and Cys42.

This sequence belongs to the rubredoxin family. Fe(3+) serves as cofactor.

In terms of biological role, rubredoxin is a small nonheme, iron protein lacking acid-labile sulfide. Its single Fe, chelated to 4 Cys, functions as an electron acceptor and may also stabilize the conformation of the molecule. The polypeptide is Rubredoxin (Thermoanaerobacterium thermosaccharolyticum (strain ATCC 7956 / DSM 571 / NCIMB 9385 / NCA 3814 / NCTC 13789 / WDCM 00135 / 2032) (Clostridium thermosaccharolyticum)).